We begin with the raw amino-acid sequence, 337 residues long: Phosphate acyltransferase (337 aa).

It belongs to the PlsX family. In terms of assembly, homodimer. Probably interacts with PlsY.

The protein localises to the cytoplasm. The catalysed reaction is a fatty acyl-[ACP] + phosphate = an acyl phosphate + holo-[ACP]. The protein operates within lipid metabolism; phospholipid metabolism. In terms of biological role, catalyzes the reversible formation of acyl-phosphate (acyl-PO(4)) from acyl-[acyl-carrier-protein] (acyl-ACP). This enzyme utilizes acyl-ACP as fatty acyl donor, but not acyl-CoA. The chain is Phosphate acyltransferase from Ehrlichia chaffeensis (strain ATCC CRL-10679 / Arkansas).